A 167-amino-acid polypeptide reads, in one-letter code: Small ribosomal subunit protein uS5 (167 aa).

The region spanning 11-74 (LQEKLIAVNR…EKARRNMINV (64 aa)) is the S5 DRBM domain.

It belongs to the universal ribosomal protein uS5 family. In terms of assembly, part of the 30S ribosomal subunit. Contacts proteins S4 and S8.

Functionally, with S4 and S12 plays an important role in translational accuracy. Located at the back of the 30S subunit body where it stabilizes the conformation of the head with respect to the body. This Klebsiella pneumoniae subsp. pneumoniae (strain ATCC 700721 / MGH 78578) protein is Small ribosomal subunit protein uS5.